A 231-amino-acid polypeptide reads, in one-letter code: LexA repressor (231 aa).

A DNA-binding region (H-T-H motif) is located at residues F26 to T46. Residues S152 and K190 each act as for autocatalytic cleavage activity in the active site.

It belongs to the peptidase S24 family. Homodimer.

The catalysed reaction is Hydrolysis of Ala-|-Gly bond in repressor LexA.. In terms of biological role, represses a number of genes involved in the response to DNA damage (SOS response), including recA and lexA. In the presence of single-stranded DNA, RecA interacts with LexA causing an autocatalytic cleavage which disrupts the DNA-binding part of LexA, leading to derepression of the SOS regulon and eventually DNA repair. The sequence is that of LexA repressor from Bradyrhizobium diazoefficiens (strain JCM 10833 / BCRC 13528 / IAM 13628 / NBRC 14792 / USDA 110).